Consider the following 122-residue polypeptide: MIQMQTNLDVADNSGARRVMCIKVLGGSKRRYATVGDIIVVSIKEAIPRGKVKKGDVMKAVVVRVRKDIRRADGSVIRFDRNAAVLINNQSEPVGTRIFGPVPRELRAKNHMKIISLAPEVL.

It belongs to the universal ribosomal protein uL14 family. In terms of assembly, part of the 50S ribosomal subunit. Forms a cluster with proteins L3 and L19. In the 70S ribosome, L14 and L19 interact and together make contacts with the 16S rRNA in bridges B5 and B8.

Binds to 23S rRNA. Forms part of two intersubunit bridges in the 70S ribosome. The chain is Large ribosomal subunit protein uL14 from Bradyrhizobium sp. (strain BTAi1 / ATCC BAA-1182).